A 422-amino-acid polypeptide reads, in one-letter code: Serine--tRNA ligase (422 aa).

An L-serine-binding site is contributed by 231–233 (TGE). 262-264 (RQE) provides a ligand contact to ATP. Glu-285 lines the L-serine pocket. 349 to 352 (EISS) provides a ligand contact to ATP. Ser-384 provides a ligand contact to L-serine.

This sequence belongs to the class-II aminoacyl-tRNA synthetase family. Type-1 seryl-tRNA synthetase subfamily. In terms of assembly, homodimer. The tRNA molecule binds across the dimer.

The protein localises to the cytoplasm. The enzyme catalyses tRNA(Ser) + L-serine + ATP = L-seryl-tRNA(Ser) + AMP + diphosphate + H(+). It carries out the reaction tRNA(Sec) + L-serine + ATP = L-seryl-tRNA(Sec) + AMP + diphosphate + H(+). It functions in the pathway aminoacyl-tRNA biosynthesis; selenocysteinyl-tRNA(Sec) biosynthesis; L-seryl-tRNA(Sec) from L-serine and tRNA(Sec): step 1/1. In terms of biological role, catalyzes the attachment of serine to tRNA(Ser). Is also able to aminoacylate tRNA(Sec) with serine, to form the misacylated tRNA L-seryl-tRNA(Sec), which will be further converted into selenocysteinyl-tRNA(Sec). The chain is Serine--tRNA ligase from Mesoplasma florum (strain ATCC 33453 / NBRC 100688 / NCTC 11704 / L1) (Acholeplasma florum).